The chain runs to 113 residues: Putative membrane protein insertion efficiency factor (113 aa).

Belongs to the UPF0161 family.

The protein resides in the cell inner membrane. Could be involved in insertion of integral membrane proteins into the membrane. The polypeptide is Putative membrane protein insertion efficiency factor (Campylobacter jejuni subsp. doylei (strain ATCC BAA-1458 / RM4099 / 269.97)).